An 88-amino-acid chain; its full sequence is DNA-directed RNA polymerase subunit omega (88 aa).

It belongs to the RNA polymerase subunit omega family. The RNAP catalytic core consists of 2 alpha, 1 beta, 1 beta' and 1 omega subunit. When a sigma factor is associated with the core the holoenzyme is formed, which can initiate transcription.

The catalysed reaction is RNA(n) + a ribonucleoside 5'-triphosphate = RNA(n+1) + diphosphate. Promotes RNA polymerase assembly. Latches the N- and C-terminal regions of the beta' subunit thereby facilitating its interaction with the beta and alpha subunits. In Pseudomonas aeruginosa (strain LESB58), this protein is DNA-directed RNA polymerase subunit omega.